The following is a 285-amino-acid chain: MSNKERTEPQWVTPSSNQDVPPDYETIGTIFGYALQALSWILIIVTFPFSMCVCLKVIKEYERVVIFRIGRLVFGGARGPGMIFIIPCIDTYRKIDLRVVSYAVPPQEILSKDSVTVSVDAVVYFRTSDPIASVNNVDDAIYSTKLLAQTTLRNALGMKTLTEMLTEREAIAQLCETILDEGTEHWGVKVERVEVKDIRLPQQLTRAMAAEAEAAREARAKVVAAEGEQKASRALKEAADVIQANPVALQLRHLQALNSIAAEHNSTIVFPVPVEMFGAFMKKDQ.

2 helical membrane-spanning segments follow: residues 27–47 (IGTI…IVTF) and 69–89 (IGRL…IPCI).

This sequence belongs to the band 7/mec-2 family.

Its subcellular location is the cell membrane. It localises to the cell junction. It is found in the gap junction. This chain is Protein unc-1 (unc-1), found in Caenorhabditis elegans.